Here is a 308-residue protein sequence, read N- to C-terminus: Olfactory receptor 2T6 (308 aa).

At 1–28 (MNENNETLTRGFTLMGLFTHNKCSGFFF) the chain is on the extracellular side. N-linked (GlcNAc...) asparagine glycosylation is present at asparagine 5. Residues 29 to 49 (GVICAVFFMAMIANGVMIFLI) form a helical membrane-spanning segment. Over 50 to 57 (NIDPHLHT) the chain is Cytoplasmic. Residues 58–78 (PMYFLLSHLSVIDTLYISTIV) traverse the membrane as a helical segment. Residues 79–98 (PKMLVDYLMGEGTISFIACT) are Extracellular-facing. Cysteine 97 and cysteine 179 are disulfide-bonded. A helical transmembrane segment spans residues 99 to 119 (AQCFLYMGFMGAEFFLLGLMA). Residues 120-145 (YDRYVAICNPLRYPVLISWRVCWMIL) are Cytoplasmic-facing. A helical membrane pass occupies residues 146–166 (ASSWFGGALDSFLLTPITMSL). At 167–203 (PFCASHQINHFFCEAPTMLRLACGDKTTYETVMYVCC) the chain is on the extracellular side. Residues 204–224 (VAMLLIPFSVVTASYTRILIT) traverse the membrane as a helical segment. Residues 225-236 (VHQMTSAEGRKK) lie on the Cytoplasmic side of the membrane. A helical membrane pass occupies residues 237–257 (AFATCSSHMMVVTLFYGAALY). The Extracellular segment spans residues 258–271 (TYTLPQSYHTPIKD). Residues 272–292 (KVFSAFYTILTPLLNPLIYSL) form a helical membrane-spanning segment. Residues 293-308 (RNRDVMGALKRVVARC) lie on the Cytoplasmic side of the membrane.

It belongs to the G-protein coupled receptor 1 family.

It localises to the cell membrane. Its function is as follows. Odorant receptor. This chain is Olfactory receptor 2T6 (OR2T6), found in Homo sapiens (Human).